A 68-amino-acid chain; its full sequence is DNA-directed RNA polymerase subunit Rpo10 (68 aa).

C7, C10, C44, and C45 together coordinate Zn(2+).

It belongs to the archaeal Rpo10/eukaryotic RPB10 RNA polymerase subunit family. As to quaternary structure, part of the RNA polymerase complex. It depends on Zn(2+) as a cofactor.

The protein localises to the cytoplasm. The enzyme catalyses RNA(n) + a ribonucleoside 5'-triphosphate = RNA(n+1) + diphosphate. Functionally, DNA-dependent RNA polymerase (RNAP) catalyzes the transcription of DNA into RNA using the four ribonucleoside triphosphates as substrates. This Methanococcus maripaludis (strain DSM 14266 / JCM 13030 / NBRC 101832 / S2 / LL) protein is DNA-directed RNA polymerase subunit Rpo10.